Consider the following 230-residue polypeptide: Iron-dependent repressor IdeR (230 aa).

The region spanning L4 to T65 is the HTH dtxR-type domain.

It belongs to the DtxR/MntR family. As to quaternary structure, homodimer.

The protein resides in the cytoplasm. Its function is as follows. Metal-dependent DNA-binding protein that controls transcription of many genes involved in iron metabolism. In Mycobacterium bovis (strain ATCC BAA-935 / AF2122/97), this protein is Iron-dependent repressor IdeR (ideR).